Here is a 253-residue protein sequence, read N- to C-terminus: Fatty acid elongase 5 (253 aa).

7 consecutive transmembrane segments (helical) span residues 24 to 44 (IFVS…LVII), 60 to 80 (IMMI…ISLA), 100 to 120 (FWIF…VLMI), 127 to 147 (QLSF…GLLL), 150 to 170 (GIGN…HFLM), 188 to 208 (ILTK…SLAP), and 214 to 234 (FALQ…ILFL). The HxxHH motif signature appears at 132 to 136 (HIYHH). The Nucleophile role is filled by His135.

The protein belongs to the ELO family.

The protein resides in the membrane. The catalysed reaction is an acyl-CoA + malonyl-CoA + H(+) = a 3-oxoacyl-CoA + CO2 + CoA. It functions in the pathway lipid metabolism; polyunsaturated fatty acid biosynthesis. Functionally, involved in the synthesis of fatty acids. Elongates C20 polyunsaturated fatty acids (PUFAs) with a preference for n-6 PUFAs. This chain is Fatty acid elongase 5, found in Trypanosoma cruzi (strain CL Brener).